Consider the following 688-residue polypeptide: Mitochondrial potassium channel ATP-binding subunit (688 aa).

The N-terminal 31 residues, 1 to 31 (MLFHFLQAGLRQCRPPARLVGLETGLSGARG), are a transit peptide targeting the mitochondrion. Helical transmembrane passes span 115–135 (PQLI…LLNI), 168–188 (LKLL…IVLL), 268–288 (GLLL…GSFL), and 342–362 (VLGV…NCIV). The ABC transmembrane type-1 domain occupies 121–409 (LTAVLLAFGA…MSVLFGQVVR (289 aa)). The ABC transporter domain occupies 442-679 (IHFKDVSFSY…GGLYADLIRR (238 aa)). 477–484 (GQSGGGKS) provides a ligand contact to ATP.

This sequence belongs to the ABC transporter superfamily. ABCB family. Multidrug resistance exporter (TC 3.A.1.201) subfamily. Component of the mitochondrial potassium channel (mitoK(ATP)).

It localises to the mitochondrion inner membrane. ATP-binding subunit of the mitochondrial ATP-gated potassium channel (mitoK(ATP)). Together with pore-forming subunit CCDC51/MITOK of the mitoK(ATP) channel, mediates ATP-dependent potassium currents across the mitochondrial inner membrane. An increase in ATP intracellular levels closes the channel, inhibiting K(+) transport, whereas a decrease in ATP levels enhances K(+) uptake in the mitochondrial matrix. Plays a role in mitochondrial iron transport. Required for maintenance of normal cardiac function, possibly by influencing mitochondrial iron export and regulating the maturation of cytosolic iron sulfur cluster-containing enzymes. The protein is Mitochondrial potassium channel ATP-binding subunit of Xenopus tropicalis (Western clawed frog).